The chain runs to 201 residues: 3-isopropylmalate dehydratase small subunit (201 aa).

The protein belongs to the LeuD family. LeuD type 1 subfamily. As to quaternary structure, heterodimer of LeuC and LeuD.

The enzyme catalyses (2R,3S)-3-isopropylmalate = (2S)-2-isopropylmalate. It participates in amino-acid biosynthesis; L-leucine biosynthesis; L-leucine from 3-methyl-2-oxobutanoate: step 2/4. In terms of biological role, catalyzes the isomerization between 2-isopropylmalate and 3-isopropylmalate, via the formation of 2-isopropylmaleate. This is 3-isopropylmalate dehydratase small subunit from Afipia carboxidovorans (strain ATCC 49405 / DSM 1227 / KCTC 32145 / OM5) (Oligotropha carboxidovorans).